Reading from the N-terminus, the 65-residue chain is UPF0434 protein Mmwyl1_2153 (65 aa).

The protein belongs to the UPF0434 family.

This chain is UPF0434 protein Mmwyl1_2153, found in Marinomonas sp. (strain MWYL1).